Reading from the N-terminus, the 153-residue chain is S-ribosylhomocysteine lyase (153 aa).

Positions 57, 61, and 124 each coordinate Fe cation.

Belongs to the LuxS family. Homodimer. The cofactor is Fe cation.

It catalyses the reaction S-(5-deoxy-D-ribos-5-yl)-L-homocysteine = (S)-4,5-dihydroxypentane-2,3-dione + L-homocysteine. Its function is as follows. Involved in the synthesis of autoinducer 2 (AI-2) which is secreted by bacteria and is used to communicate both the cell density and the metabolic potential of the environment. The regulation of gene expression in response to changes in cell density is called quorum sensing. Catalyzes the transformation of S-ribosylhomocysteine (RHC) to homocysteine (HC) and 4,5-dihydroxy-2,3-pentadione (DPD). This chain is S-ribosylhomocysteine lyase, found in Oceanobacillus iheyensis (strain DSM 14371 / CIP 107618 / JCM 11309 / KCTC 3954 / HTE831).